Consider the following 591-residue polypeptide: Aspartate--tRNA(Asp/Asn) ligase (591 aa).

Residue Glu175 participates in L-aspartate binding. The tract at residues 199–202 (QQFK) is aspartate. L-aspartate contacts are provided by Arg221 and His453. Residue 221–223 (RDE) coordinates ATP. Glu486 contacts ATP. Arg493 provides a ligand contact to L-aspartate. 538–541 (GIDR) contacts ATP.

This sequence belongs to the class-II aminoacyl-tRNA synthetase family. Type 1 subfamily. As to quaternary structure, homodimer.

The protein localises to the cytoplasm. It catalyses the reaction tRNA(Asx) + L-aspartate + ATP = L-aspartyl-tRNA(Asx) + AMP + diphosphate. In terms of biological role, aspartyl-tRNA synthetase with relaxed tRNA specificity since it is able to aspartylate not only its cognate tRNA(Asp) but also tRNA(Asn). Reaction proceeds in two steps: L-aspartate is first activated by ATP to form Asp-AMP and then transferred to the acceptor end of tRNA(Asp/Asn). This chain is Aspartate--tRNA(Asp/Asn) ligase, found in Jannaschia sp. (strain CCS1).